A 427-amino-acid chain; its full sequence is MLDLKLIRQKPEWAKEKLAARAIKGEEIDELLALDTRRRQVTVQTEELKAKRNDVSGQIAVMKRNKENADDQIKAMREVGQKIAALDKELAQLNEKVTYILVRLPNFPADDVPMSLNEDDSREEYKWGNMPTFDFEPKHHWDIGEKLGILDFERAAKVAGSRFVYYKGAGARLERAVYNFFLDEHQKEGYEEIIPPYLVNNDSMFGTGQFPKFTDATYTITNDGEPLTLIPTAEVPLVNYYRNDIIDAEKLPVNFTALTPAFRSEAGSAGRDTRGLIRMHQFNKVEMVKFCKPEDSWKQLQNLIHDAEDLLQKLGLPYHVITLASNDASFTSAKTNDLEVWMPAQDRYREISSCSNCTDFQARRAQIRYRDDDGKLQFVHTLNGSGLAVGRTVASILENYQQADGSVKIPDVIVPYMQGQTAITKED.

An L-serine-binding site is contributed by 232 to 234 (TAE). Residue 263–265 (RSE) participates in ATP binding. Glu286 is an L-serine binding site. 350-353 (EISS) is an ATP binding site. Position 385 (Ser385) interacts with L-serine.

The protein belongs to the class-II aminoacyl-tRNA synthetase family. Type-1 seryl-tRNA synthetase subfamily. In terms of assembly, homodimer. The tRNA molecule binds across the dimer.

The protein resides in the cytoplasm. It catalyses the reaction tRNA(Ser) + L-serine + ATP = L-seryl-tRNA(Ser) + AMP + diphosphate + H(+). The catalysed reaction is tRNA(Sec) + L-serine + ATP = L-seryl-tRNA(Sec) + AMP + diphosphate + H(+). Its pathway is aminoacyl-tRNA biosynthesis; selenocysteinyl-tRNA(Sec) biosynthesis; L-seryl-tRNA(Sec) from L-serine and tRNA(Sec): step 1/1. Its function is as follows. Catalyzes the attachment of serine to tRNA(Ser). Is also able to aminoacylate tRNA(Sec) with serine, to form the misacylated tRNA L-seryl-tRNA(Sec), which will be further converted into selenocysteinyl-tRNA(Sec). This Lacticaseibacillus paracasei (strain ATCC 334 / BCRC 17002 / CCUG 31169 / CIP 107868 / KCTC 3260 / NRRL B-441) (Lactobacillus paracasei) protein is Serine--tRNA ligase.